The following is an 83-amino-acid chain: Large ribosomal subunit protein bL27 (83 aa).

It belongs to the bacterial ribosomal protein bL27 family.

The protein is Large ribosomal subunit protein bL27 of Thermotoga neapolitana (strain ATCC 49049 / DSM 4359 / NBRC 107923 / NS-E).